Consider the following 342-residue polypeptide: Metalloendoproteinase 4-MMP (342 aa).

Residues 1–34 (MHHHHHPCNRKPFTTIFSFFLLYLNLHNQQIIEA) form the signal peptide. A propeptide spans 35-124 (RNPSQFTTNP…KTAPFHTGKK (90 aa)) (activation peptide). The Cysteine switch signature appears at 104–111 (PRCGFPDD). The Zn(2+) site is built by C106 and H252. The active site involves E253. Zn(2+) is bound by residues H256 and H262. N300 carries an N-linked (GlcNAc...) asparagine glycan. D317 carries GPI-anchor amidated aspartate lipidation. Residues 318–342 (GSRIRSQGMIYSTLSTVIALCFLNW) constitute a propeptide, removed in mature form.

Belongs to the peptidase M10A family. Matrix metalloproteinases (MMPs) subfamily. Requires Zn(2+) as cofactor. Mostly expressed in flowers and stems, and, to a lower extent, in leaves and roots.

It localises to the cell membrane. Repressed by acetohydroxamic acid (AHA). Its function is as follows. Matrix metalloproteinases (MMPs) or matrixins may play a role in the degradation and remodeling of the extracellular matrix (ECM) during development or in response to stresses. Active on myelin basic protein (MBP) and, to some extent, on McaPLGLDpaAR-NH(2) (QF24) and beta-casein. This is Metalloendoproteinase 4-MMP from Arabidopsis thaliana (Mouse-ear cress).